The chain runs to 264 residues: RNA-binding protein pos-1 (264 aa).

Residues 56 to 82 (QDKETQNSASQPTSEQSLANRDPCTVP) are disordered. Over residues 61-74 (QNSASQPTSEQSLA) the composition is skewed to polar residues. 2 consecutive C3H1-type zinc fingers follow at residues 98-126 (AFKT…HGVH) and 141-169 (KYKT…HKIV). Zn(2+) is bound by residues Cys-104, Cys-113, Cys-119, His-123, Cys-147, Cys-156, Cys-162, and His-166.

Monomer.

It localises to the cytoplasm. RNA-binding protein that coordinates cell fate specification and differentiation during early embryogenesis. Binds to a consensus pos-1 recognition element (PRE) consisting of the sequence 5'-UA(U 2-3)RGD(N 1-3)G-3', where R is any purine, D is A, G, or U, and N is any base. The PRE motif is found within the 3' untranslated region of many maternal transcripts required for early development. Binds to the 3' untranslated region (UTR) of Notch receptor homolog glp-1, thereby repressing glp-1 translation in the posterior blastomeres in the embryo. Binding to glp-1 3' UTR excludes cell fate regulator gld-1 binding to an overlapping binding site in the glp-1 3' UTR. Binds to the neg-1 3'UTR thereby opposing neg-1 expression and cytoplasmic polyadenylation of the neg-1 mRNA poly(A) tail promoted by gld-2 and gld-3. By inhibiting the cytoplasmic lengthening of neg-1 mRNA, restricts the accumulation of neg-1 protein and promotes endo-mesoderm development in anterior blastomeres. Essential for germline specification. This chain is RNA-binding protein pos-1, found in Caenorhabditis elegans.